We begin with the raw amino-acid sequence, 187 residues long: Elongation factor P (187 aa).

The protein belongs to the elongation factor P family.

The protein localises to the cytoplasm. It functions in the pathway protein biosynthesis; polypeptide chain elongation. Functionally, involved in peptide bond synthesis. Stimulates efficient translation and peptide-bond synthesis on native or reconstituted 70S ribosomes in vitro. Probably functions indirectly by altering the affinity of the ribosome for aminoacyl-tRNA, thus increasing their reactivity as acceptors for peptidyl transferase. In Mycobacterium sp. (strain JLS), this protein is Elongation factor P.